Reading from the N-terminus, the 203-residue chain is Secreted phosphoprotein 24 (203 aa).

An N-terminal signal peptide occupies residues 1 to 23; that stretch reads MEKMVMKMLVIFVFGMNHWTCTG. 2 disulfides stabilise this stretch: Cys-86–Cys-97 and Cys-110–Cys-128. Ser-90 carries the phosphoserine modification. Phosphoserine occurs at positions 138, 139, 166, and 175. Positions 155–174 are disordered; the sequence is NSHLLGLTPDRSRGEPLYER. The segment covering 164–174 has biased composition (basic and acidic residues); that stretch reads DRSRGEPLYER.

It belongs to the SPP2 family. Multiply phosphorylated at serine residues. Post-translationally, phosphorylation sites are present in the extracellular medium.

Its subcellular location is the secreted. Could coordinate an aspect of bone turnover. In Ovis aries (Sheep), this protein is Secreted phosphoprotein 24 (SPP2).